Consider the following 725-residue polypeptide: Consortin (725 aa).

Disordered regions lie at residues 1–72, 103–124, 296–353, 375–397, and 485–510; these read MDDS…LNNN, GKDK…AKKI, LLVS…SLSV, TQSS…CEDD, and QQPD…ENVL. The Cytoplasmic segment spans residues 1-664; it reads MDDSDTPTYY…LDQDEVGGGS (664 aa). Residues 63–72 are compositionally biased toward polar residues; the sequence is VSEQDSLNNN. The segment covering 109-121 has biased composition (basic residues); the sequence is PGKRSPRSKKGTA. A compositionally biased stretch (basic and acidic residues) spans 300-314; it reads EDPKEGGATTKESES. Polar residues-rich tracts occupy residues 343–353 and 375–388; these read DVQTDSPSLSV and TQSS…SGPD. The chain crosses the membrane as a helical span at residues 665 to 685; it reads CILLVLLCIATVFLSVGGTAL. The Extracellular portion of the chain corresponds to 686–725; the sequence is YCTFGDMESPVCTDFADNMDFYYTKLLQGVAELKHWIYLS.

Belongs to the CNST family. As to quaternary structure, interacts with connexins GJA1/CX43, GJB1/CX32, GJB2/CX26, GJB3/CX31, GJB6/CX30 and GJC1/CX45. Also interacts with GGA1 and GGA2. Does not interact with PANX1.

Its subcellular location is the cell membrane. It is found in the golgi apparatus. The protein localises to the trans-Golgi network membrane. The protein resides in the cytoplasmic vesicle. It localises to the secretory vesicle. In terms of biological role, required for targeting of connexins to the plasma membrane. The chain is Consortin (CNST) from Homo sapiens (Human).